A 412-amino-acid polypeptide reads, in one-letter code: Membrane fusion protein MtrC (412 aa).

The N-terminal stretch at 1-24 (MAFYASKAMRAAALAAAVALALSS) is a signal peptide. Residue Cys-25 is the site of N-palmitoyl cysteine attachment. A lipid anchor (S-diacylglycerol cysteine) is attached at Cys-25. Positions 377 to 412 (AKKVTPKEWAPSENQAAAPQAGVQTASEAKPASEAK) are disordered. Polar residues predominate over residues 388-403 (SENQAAAPQAGVQTAS).

This sequence belongs to the membrane fusion protein (MFP) (TC 8.A.1) family.

Its subcellular location is the cell inner membrane. Functionally, cell membrane lipoprotein, involved in cell membrane permeability to hydrophobic compounds such as antibiotics, dyes and detergents. This is Membrane fusion protein MtrC (mtrC) from Neisseria gonorrhoeae.